The sequence spans 594 residues: ATP-dependent RNA helicase DBP9 (594 aa).

The Q motif signature appears at 17–45; that stretch reads TTFEAFHLDSRLLQAIKNIGFQYPTLIQS. A Helicase ATP-binding domain is found at 49 to 233; it reads PLALQQKRDI…QKFCRSPAIL (185 aa). 62-69 contacts ATP; it reads AATGSGKT. Positions 179–182 match the DEAD box motif; sequence DEVD. The Helicase C-terminal domain maps to 246–476; sequence KLLQYYVKVS…PYKFDQKQVE (231 aa). 2 disordered regions span residues 339-377 and 558-594; these read EDDEIEEGHNTENQEEKSLEGEPENDKKPSKKKKVQVKK and TKVKFVPFHNAKKRHSHKKGRVSKPKNGKVDPLKNFK. Basic and acidic residues predominate over residues 345-366; the sequence is EGHNTENQEEKSLEGEPENDKK. The span at 567–584 shows a compositional bias: basic residues; sequence NAKKRHSHKKGRVSKPKN. Residues 585–594 are compositionally biased toward basic and acidic residues; it reads GKVDPLKNFK.

The protein belongs to the DEAD box helicase family. DDX56/DBP9 subfamily. In terms of assembly, interacts with DBP6.

Its subcellular location is the nucleus. The protein resides in the nucleolus. The catalysed reaction is ATP + H2O = ADP + phosphate + H(+). Its function is as follows. ATP-binding RNA helicase involved in the biogenesis of 60S ribosomal subunits and is required for the normal formation of 25S and 5.8S rRNAs. The sequence is that of ATP-dependent RNA helicase DBP9 (DBP9) from Saccharomyces cerevisiae (strain YJM789) (Baker's yeast).